The primary structure comprises 517 residues: Pentatricopeptide repeat-containing protein At5g42450, mitochondrial (517 aa).

The transit peptide at 1 to 23 (MLHMILSQRVILLRKYHSSANAL) directs the protein to the mitochondrion. 9 PPR repeats span residues 57 to 91 (DVIS…GIRP), 92 to 126 (NEFT…GLAS), 127 to 157 (NVFV…TRDP), 158 to 188 (NVVS…MPER), 189 to 223 (SVVT…GVVI), 225 to 259 (NEST…LGKR), 261 to 291 (NVFV…LEEE), 294 to 329 (NIVS…NLRP), and 368 to 398 (ELEH…MPLD). The interval 403–478 (FWKALLGGCQ…FTGCSWIEVR (76 aa)) is type E motif. The type E(+) motif stretch occupies residues 479–509 (DQIRVFVNADKNNELKDEVYRMLALVSQHLE).

The protein belongs to the PPR family. PCMP-E subfamily.

The protein localises to the mitochondrion. This chain is Pentatricopeptide repeat-containing protein At5g42450, mitochondrial (PCMP-E102), found in Arabidopsis thaliana (Mouse-ear cress).